The sequence spans 1403 residues: DNA-directed RNA polymerase subunit beta' (1403 aa).

Zn(2+) contacts are provided by Cys-71, Cys-73, Cys-86, and Cys-89. The Mg(2+) site is built by Asp-462, Asp-464, and Asp-466. Zn(2+) contacts are provided by Cys-820, Cys-893, Cys-900, and Cys-903.

The protein belongs to the RNA polymerase beta' chain family. The RNAP catalytic core consists of 2 alpha, 1 beta, 1 beta' and 1 omega subunit. When a sigma factor is associated with the core the holoenzyme is formed, which can initiate transcription. Mg(2+) is required as a cofactor. Requires Zn(2+) as cofactor.

It carries out the reaction RNA(n) + a ribonucleoside 5'-triphosphate = RNA(n+1) + diphosphate. DNA-dependent RNA polymerase catalyzes the transcription of DNA into RNA using the four ribonucleoside triphosphates as substrates. This is DNA-directed RNA polymerase subunit beta' from Methylobacterium radiotolerans (strain ATCC 27329 / DSM 1819 / JCM 2831 / NBRC 15690 / NCIMB 10815 / 0-1).